Consider the following 56-residue polypeptide: Ovomucoid (56 aa).

The Kazal-like domain maps to 6–56; the sequence is VDCSDHPKPACLQEQKPLCGSDNKTYDNKCSFCNAVVDSNGTLTLSHFGKC. 3 cysteine pairs are disulfide-bonded: Cys-8–Cys-38, Cys-16–Cys-35, and Cys-24–Cys-56. An N-linked (GlcNAc...) asparagine glycan is attached at Asn-45.

Its subcellular location is the secreted. In Penelope jacquacu (Spix's guan), this protein is Ovomucoid.